Reading from the N-terminus, the 68-residue chain is Large ribosomal subunit protein uL29 (68 aa).

This sequence belongs to the universal ribosomal protein uL29 family.

The chain is Large ribosomal subunit protein uL29 from Finegoldia magna (strain ATCC 29328 / DSM 20472 / WAL 2508) (Peptostreptococcus magnus).